An 838-amino-acid polypeptide reads, in one-letter code: 1,4-alpha-glucan branching enzyme GlgB 1 (838 aa).

Positions 1-11 (MIPRPPSDDRA) are enriched in basic and acidic residues. Disordered regions lie at residues 1 to 98 (MIPR…VSKK) and 116 to 142 (PVSP…SVLG). The span at 29–57 (KKAAAAKKTAGKKATPAAKATAAKGAVTK) shows a compositional bias: low complexity. Residue Asp-513 is the Nucleophile of the active site. Glu-566 (proton donor) is an active-site residue. Positions 793 to 822 (TDGARYGGSDVTNPHPVKPEPQGRHGRPAS) are disordered.

Belongs to the glycosyl hydrolase 13 family. GlgB subfamily. As to quaternary structure, monomer.

The enzyme catalyses Transfers a segment of a (1-&gt;4)-alpha-D-glucan chain to a primary hydroxy group in a similar glucan chain.. It participates in glycan biosynthesis; glycogen biosynthesis. Its function is as follows. Catalyzes the formation of the alpha-1,6-glucosidic linkages in glycogen by scission of a 1,4-alpha-linked oligosaccharide from growing alpha-1,4-glucan chains and the subsequent attachment of the oligosaccharide to the alpha-1,6 position. This is 1,4-alpha-glucan branching enzyme GlgB 1 from Streptomyces avermitilis (strain ATCC 31267 / DSM 46492 / JCM 5070 / NBRC 14893 / NCIMB 12804 / NRRL 8165 / MA-4680).